Here is a 423-residue protein sequence, read N- to C-terminus: tRNA(Met) cytidine acetate ligase (423 aa).

Residues 7–20 (VVEY…HLYH), G102, N165, and R190 each bind ATP.

This sequence belongs to the TmcAL family.

It is found in the cytoplasm. It catalyses the reaction cytidine(34) in elongator tRNA(Met) + acetate + ATP = N(4)-acetylcytidine(34) in elongator tRNA(Met) + AMP + diphosphate. Catalyzes the formation of N(4)-acetylcytidine (ac(4)C) at the wobble position of elongator tRNA(Met), using acetate and ATP as substrates. First activates an acetate ion to form acetyladenylate (Ac-AMP) and then transfers the acetyl group to tRNA to form ac(4)C34. This is tRNA(Met) cytidine acetate ligase from Thermosipho africanus (strain TCF52B).